Consider the following 137-residue polypeptide: Large ribosomal subunit protein uL16 (137 aa).

A compositionally biased stretch (basic residues) spans Met1–Asn17. Residues Met1–Gly24 are disordered.

The protein belongs to the universal ribosomal protein uL16 family. As to quaternary structure, part of the 50S ribosomal subunit.

Functionally, binds 23S rRNA and is also seen to make contacts with the A and possibly P site tRNAs. The chain is Large ribosomal subunit protein uL16 from Aeromonas salmonicida (strain A449).